A 467-amino-acid chain; its full sequence is GTPase Der (467 aa).

2 EngA-type G domains span residues 25-188 (PVVA…PEAP) and 199-372 (RRVA…ASWE). Residues 31-38 (GRPNVGKS), 78-82 (DTGGW), 140-143 (NKAD), 205-212 (GRPNVGKS), 252-256 (DTAGL), and 317-320 (NKWD) each bind GTP. The KH-like domain occupies 373–455 (TRVPTAQLNA…PIEISVRARK (83 aa)).

It belongs to the TRAFAC class TrmE-Era-EngA-EngB-Septin-like GTPase superfamily. EngA (Der) GTPase family. In terms of assembly, associates with the 50S ribosomal subunit.

GTPase that plays an essential role in the late steps of ribosome biogenesis. The polypeptide is GTPase Der (Salinispora tropica (strain ATCC BAA-916 / DSM 44818 / JCM 13857 / NBRC 105044 / CNB-440)).